We begin with the raw amino-acid sequence, 427 residues long: 3-phosphoshikimate 1-carboxyvinyltransferase (427 aa).

Positions 22, 23, and 27 each coordinate 3-phosphoshikimate. K22 is a binding site for phosphoenolpyruvate. The phosphoenolpyruvate site is built by G96 and R124. 3-phosphoshikimate contacts are provided by S169, S170, Q171, S197, D313, N336, and K340. Q171 lines the phosphoenolpyruvate pocket. D313 serves as the catalytic Proton acceptor. Phosphoenolpyruvate is bound by residues R344, R386, and K411.

It belongs to the EPSP synthase family. As to quaternary structure, monomer.

Its subcellular location is the cytoplasm. The catalysed reaction is 3-phosphoshikimate + phosphoenolpyruvate = 5-O-(1-carboxyvinyl)-3-phosphoshikimate + phosphate. Its pathway is metabolic intermediate biosynthesis; chorismate biosynthesis; chorismate from D-erythrose 4-phosphate and phosphoenolpyruvate: step 6/7. Catalyzes the transfer of the enolpyruvyl moiety of phosphoenolpyruvate (PEP) to the 5-hydroxyl of shikimate-3-phosphate (S3P) to produce enolpyruvyl shikimate-3-phosphate and inorganic phosphate. The chain is 3-phosphoshikimate 1-carboxyvinyltransferase from Shigella flexneri serotype 5b (strain 8401).